Here is a 768-residue protein sequence, read N- to C-terminus: Ral guanine nucleotide dissociation stimulator-like 1 (768 aa).

The N-terminal Ras-GEF domain maps to 65 to 196 (KIRTIKAGTL…RAQNLLEQFQ (132 aa)). Residues 232 to 501 (SEDLVAEQLT…YALSCEIEAA (270 aa)) form the Ras-GEF domain. Phosphoserine is present on S520. The tract at residues 528–623 (MITSPTPTKE…PPSCNNNPKI (96 aa)) is disordered. Composition is skewed to low complexity over residues 541–561 (STAS…SCES), 586–596 (ESSSSCSSIHS), and 605–621 (SSLI…NNNP). The Ras-associating domain maps to 648 to 735 (DTCIIRISVE…FDFILRKKNS (88 aa)).

In terms of assembly, interacts with Ras. In terms of tissue distribution, expressed in a wide variety of tissues with strong expression being seen in the heart, brain, kidney, spleen and testis.

Functionally, probable guanine nucleotide exchange factor. The sequence is that of Ral guanine nucleotide dissociation stimulator-like 1 (RGL1) from Homo sapiens (Human).